The sequence spans 432 residues: MASSVRLVKKPVLVAPVDPTPSTVLSLSSLDSQLFLRFPIEYLLVYASPHGVDRDVTAARVKAALARSLVPYYPLAGRVKTRPDSTGLDVVCQAQGAGLLEAVSDYTASDFQRAPRSVAEWRKLLLVEVFKVVPPLVVQLTWLSDGCVALGIGFSHCVIDGIGSSEFLNLFAELATSRAKLSEFQPKPVWDRQLLNSAGRTNLGTHPEFGRVPDLSGFVTRFAQERLSPTSITFDKTWLKELKNIAMSTSQAGEFPYTSFEVLSGHIWRSWARSLNLPAKQVLKLLFSINIRNRVKPSLPAGYYGNAFVLGCAQTSVKDLTEKGLGYCADLVRGAKERVGDEYAREVVESVSWPRRASPDSVGVLIISQWSRLGLDRVDFGLGRPVHVGPICCDRYCLFLPVRDRMEAVKVMVAVPTSAVDRYENLMRSPYS.

Active-site proton acceptor residues include His-156 and Asp-379.

This sequence belongs to the plant acyltransferase family.

It catalyses the reaction 2-(methylsulfanyl)acetyl-CoA + butan-1-ol = butyl 2-(methylsulfanyl)acetate + CoA. The enzyme catalyses ethanol + acetyl-CoA = ethyl acetate + CoA. It carries out the reaction butan-1-ol + acetyl-CoA = butyl acetate + CoA. The catalysed reaction is butan-1-ol + propanoyl-CoA = butyl propanoate + CoA. In terms of biological role, involved in the biosynthesis of volatile esters which confer kiwifruit flavor. Alcohol acyl transferase that can use a wide range of alcohols as substrate to produce esters. Exhibits acetyl-CoA:alcohol O-acyltransferase activity. This Actinidia chinensis var. chinensis (Chinese soft-hair kiwi) protein is Alcohol acyltransferase 9.